The following is a 159-amino-acid chain: 2-C-methyl-D-erythritol 2,4-cyclodiphosphate synthase (159 aa).

A divalent metal cation-binding residues include Asp10 and His12. 4-CDP-2-C-methyl-D-erythritol 2-phosphate-binding positions include 10–12 and 36–37; these read DVH and HS. Residue His44 coordinates a divalent metal cation. 4-CDP-2-C-methyl-D-erythritol 2-phosphate is bound by residues 58–60, 63–67, 102–108, 134–137, Phe141, 141–144, and Arg144; these read DIG, FPDTD, AQAPKMA, TTTE, and FTGR.

This sequence belongs to the IspF family. Homotrimer. Requires a divalent metal cation as cofactor.

The catalysed reaction is 4-CDP-2-C-methyl-D-erythritol 2-phosphate = 2-C-methyl-D-erythritol 2,4-cyclic diphosphate + CMP. It participates in isoprenoid biosynthesis; isopentenyl diphosphate biosynthesis via DXP pathway; isopentenyl diphosphate from 1-deoxy-D-xylulose 5-phosphate: step 4/6. Functionally, involved in the biosynthesis of isopentenyl diphosphate (IPP) and dimethylallyl diphosphate (DMAPP), two major building blocks of isoprenoid compounds. Catalyzes the conversion of 4-diphosphocytidyl-2-C-methyl-D-erythritol 2-phosphate (CDP-ME2P) to 2-C-methyl-D-erythritol 2,4-cyclodiphosphate (ME-CPP) with a corresponding release of cytidine 5-monophosphate (CMP). The protein is 2-C-methyl-D-erythritol 2,4-cyclodiphosphate synthase of Shewanella oneidensis (strain ATCC 700550 / JCM 31522 / CIP 106686 / LMG 19005 / NCIMB 14063 / MR-1).